The chain runs to 249 residues: Phosphate import ATP-binding protein PstB 2 (249 aa).

The ABC transporter domain maps to 4-244 (FDIENLDLYY…PSDDRTRGYV (241 aa)). Position 36–43 (36–43 (GPSGCGKS)) interacts with ATP.

This sequence belongs to the ABC transporter superfamily. Phosphate importer (TC 3.A.1.7) family. In terms of assembly, the complex is composed of two ATP-binding proteins (PstB), two transmembrane proteins (PstC and PstA) and a solute-binding protein (PstS).

It localises to the cell inner membrane. It catalyses the reaction phosphate(out) + ATP + H2O = ADP + 2 phosphate(in) + H(+). In terms of biological role, part of the ABC transporter complex PstSACB involved in phosphate import. Responsible for energy coupling to the transport system. This is Phosphate import ATP-binding protein PstB 2 from Vibrio vulnificus (strain CMCP6).